Consider the following 294-residue polypeptide: Glycine--tRNA ligase alpha subunit (294 aa).

Belongs to the class-II aminoacyl-tRNA synthetase family. As to quaternary structure, tetramer of two alpha and two beta subunits.

The protein localises to the cytoplasm. It catalyses the reaction tRNA(Gly) + glycine + ATP = glycyl-tRNA(Gly) + AMP + diphosphate. This is Glycine--tRNA ligase alpha subunit from Lawsonia intracellularis (strain PHE/MN1-00).